A 375-amino-acid chain; its full sequence is 23S rRNA (uracil(747)-C(5))-methyltransferase RlmC (375 aa).

The [4Fe-4S] cluster site is built by cysteine 3, cysteine 11, cysteine 14, and cysteine 87. 4 residues coordinate S-adenosyl-L-methionine: glutamine 212, phenylalanine 241, glutamate 262, and asparagine 307. The active-site Nucleophile is cysteine 334.

It belongs to the class I-like SAM-binding methyltransferase superfamily. RNA M5U methyltransferase family. RlmC subfamily.

The catalysed reaction is uridine(747) in 23S rRNA + S-adenosyl-L-methionine = 5-methyluridine(747) in 23S rRNA + S-adenosyl-L-homocysteine + H(+). Catalyzes the formation of 5-methyl-uridine at position 747 (m5U747) in 23S rRNA. The protein is 23S rRNA (uracil(747)-C(5))-methyltransferase RlmC of Serratia proteamaculans (strain 568).